A 217-amino-acid chain; its full sequence is Protein-L-isoaspartate O-methyltransferase 2 (217 aa).

Residue Ser-64 is part of the active site.

The protein belongs to the methyltransferase superfamily. L-isoaspartyl/D-aspartyl protein methyltransferase family.

The protein localises to the cytoplasm. It carries out the reaction [protein]-L-isoaspartate + S-adenosyl-L-methionine = [protein]-L-isoaspartate alpha-methyl ester + S-adenosyl-L-homocysteine. In terms of biological role, catalyzes the methyl esterification of L-isoaspartyl residues in peptides and proteins that result from spontaneous decomposition of normal L-aspartyl and L-asparaginyl residues. It plays a role in the repair and/or degradation of damaged proteins. The chain is Protein-L-isoaspartate O-methyltransferase 2 from Rhodopseudomonas palustris (strain HaA2).